The primary structure comprises 153 residues: Lipoprotein signal peptidase (153 aa).

Helical transmembrane passes span 6–26, 60–80, and 85–105; these read IVAV…SYIV, QQLL…WYLH, and DSFW…GNFI. Residues Asp115 and Asp131 contribute to the active site. A helical membrane pass occupies residues 124–144; that stretch reads FAIFNVADSYLTVGVIILLIA.

It belongs to the peptidase A8 family.

Its subcellular location is the cell membrane. It catalyses the reaction Release of signal peptides from bacterial membrane prolipoproteins. Hydrolyzes -Xaa-Yaa-Zaa-|-(S,diacylglyceryl)Cys-, in which Xaa is hydrophobic (preferably Leu), and Yaa (Ala or Ser) and Zaa (Gly or Ala) have small, neutral side chains.. It participates in protein modification; lipoprotein biosynthesis (signal peptide cleavage). Functionally, this protein specifically catalyzes the removal of signal peptides from prolipoproteins. This chain is Lipoprotein signal peptidase, found in Streptococcus pneumoniae (strain ATCC BAA-255 / R6).